The primary structure comprises 289 residues: Acetyl-coenzyme A carboxylase carboxyl transferase subunit beta (289 aa).

The CoA carboxyltransferase N-terminal domain maps to 28–289; the sequence is VMTKCPECKK…QGGGMAVWQS (262 aa). Zn(2+) is bound by residues Cys-32, Cys-35, Cys-51, and Cys-54. A C4-type zinc finger spans residues 32–54; that stretch reads CPECKKIMYTKELLKNLKVCVNC.

Belongs to the AccD/PCCB family. In terms of assembly, acetyl-CoA carboxylase is a heterohexamer composed of biotin carboxyl carrier protein (AccB), biotin carboxylase (AccC) and two subunits each of ACCase subunit alpha (AccA) and ACCase subunit beta (AccD). The cofactor is Zn(2+).

The protein localises to the cytoplasm. The enzyme catalyses N(6)-carboxybiotinyl-L-lysyl-[protein] + acetyl-CoA = N(6)-biotinyl-L-lysyl-[protein] + malonyl-CoA. The protein operates within lipid metabolism; malonyl-CoA biosynthesis; malonyl-CoA from acetyl-CoA: step 1/1. In terms of biological role, component of the acetyl coenzyme A carboxylase (ACC) complex. Biotin carboxylase (BC) catalyzes the carboxylation of biotin on its carrier protein (BCCP) and then the CO(2) group is transferred by the transcarboxylase to acetyl-CoA to form malonyl-CoA. This is Acetyl-coenzyme A carboxylase carboxyl transferase subunit beta from Bacillus cereus (strain G9842).